We begin with the raw amino-acid sequence, 168 residues long: ATP synthase subunit b (168 aa).

A helical transmembrane segment spans residues Ala-9–Leu-29.

Belongs to the ATPase B chain family. In terms of assembly, F-type ATPases have 2 components, F(1) - the catalytic core - and F(0) - the membrane proton channel. F(1) has five subunits: alpha(3), beta(3), gamma(1), delta(1), epsilon(1). F(0) has three main subunits: a(1), b(2) and c(10-14). The alpha and beta chains form an alternating ring which encloses part of the gamma chain. F(1) is attached to F(0) by a central stalk formed by the gamma and epsilon chains, while a peripheral stalk is formed by the delta and b chains.

Its subcellular location is the cell membrane. Its function is as follows. F(1)F(0) ATP synthase produces ATP from ADP in the presence of a proton or sodium gradient. F-type ATPases consist of two structural domains, F(1) containing the extramembraneous catalytic core and F(0) containing the membrane proton channel, linked together by a central stalk and a peripheral stalk. During catalysis, ATP synthesis in the catalytic domain of F(1) is coupled via a rotary mechanism of the central stalk subunits to proton translocation. In terms of biological role, component of the F(0) channel, it forms part of the peripheral stalk, linking F(1) to F(0). In Bacillus cytotoxicus (strain DSM 22905 / CIP 110041 / 391-98 / NVH 391-98), this protein is ATP synthase subunit b.